A 55-amino-acid chain; its full sequence is Ribosome modulation factor (55 aa).

Belongs to the ribosome modulation factor family. In terms of assembly, associates exclusively with 100S ribosomes.

The protein resides in the cytoplasm. Its function is as follows. During stationary phase, converts 70S ribosomes to an inactive dimeric form (100S ribosomes). May form immature 90S particles, which are converted to mature 100S ribosomes by the hibernation promoting factor Hpf. This is Ribosome modulation factor from Escherichia coli O157:H7.